The chain runs to 965 residues: Sarcosine oxidase subunit alpha (965 aa).

NAD(+) contacts are provided by alanine 139, aspartate 158, glutamate 159, arginine 160, threonine 166, valine 205, alanine 418, leucine 423, and threonine 425. Positions 692 and 784 each coordinate (6R)-5,10-methylene-5,6,7,8-tetrahydrofolate.

It belongs to the GcvT family. In terms of assembly, heterotetramer composed of subunits alpha (SoxA), beta (SoxB), gamma (SoxG) and delta (SoxD). It depends on NAD(+) as a cofactor.

The protein localises to the cytoplasm. The catalysed reaction is sarcosine + (6S)-5,6,7,8-tetrahydrofolate + O2 = (6R)-5,10-methylene-5,6,7,8-tetrahydrofolate + glycine + H2O2. It carries out the reaction sarcosine + O2 + H2O = formaldehyde + glycine + H2O2. With respect to regulation, inhibited by Zn(2+), Cu(2+), Cd(2+), Hg(2+), Ag(+), p-chloromercuribenzoate (p-CMB), iodoacetamide, N-ethylmaleimide, CN(-), o-phenanthroline and sodium lauryl sulfate. In terms of biological role, in the presence of tetrahydrofolate, catalyzes the oxidative demethylation of sarcosine to yield glycine, 5,10-methylenetetrahydrofolate and hydrogen peroxide. In the absence of tetrahydrofolate, catalyzes the oxidative demethylation of sarcosine to yield glycine, formaldehyde and hydrogen peroxide. Can also use N-methyl-L-alanine and N-ethyl-L-glycine. Is very specific for oxygen as an acceptor. The protein is Sarcosine oxidase subunit alpha of Corynebacterium sp. (strain U-96).